We begin with the raw amino-acid sequence, 333 residues long: Sodium/bile acid cotransporter 7 (333 aa).

The Cytoplasmic segment spans residues 1-10; that stretch reads MGLLERLRKE. Residues 11-31 form a helical membrane-spanning segment; the sequence is WFIAGIALVIAAARLEPAVGV. Topologically, residues 32-37 are extracellular; it reads KGGPLK. Residues 38–58 form a helical membrane-spanning segment; it reads PEITITYIAVSAIFFNSGLSL. The Cytoplasmic portion of the chain corresponds to 59–71; it reads KTEELTSALMHVK. Residues 72–92 form a helical membrane-spanning segment; it reads LHLFVQIFTLVFFPTAIWLFL. Residues 93 to 103 lie on the Extracellular side of the membrane; sequence QLLSITPINEW. Residues 104-124 form a helical membrane-spanning segment; the sequence is LLKGLQTVGCMPPPVSSAVIL. Residues 125 to 126 lie on the Cytoplasmic side of the membrane; it reads TK. The chain crosses the membrane as a helical span at residues 127–147; that stretch reads AVGGNEAAAIFNSAFGSFLLG. Topologically, residues 148-151 are extracellular; the sequence is SSSS. Residues 152–172 traverse the membrane as a helical segment; that stretch reads VPFTSIFSQLFMTVVVPLIIG. Topologically, residues 173-189 are cytoplasmic; it reads QIVRRYIKDWLERRKPP. Residues 190 to 210 traverse the membrane as a helical segment; sequence FGTISSCVLLMIIYTTFCDTF. The Extracellular segment spans residues 211–222; the sequence is ANPNIDLDKFSL. The helical transmembrane segment at 223 to 243 threads the bilayer; the sequence is IIIVFIIFSVQMSFMFLTFLF. The Cytoplasmic segment spans residues 244-258; sequence STRSNSGFTPADTVA. A helical transmembrane segment spans residues 259–279; the sequence is IIFCSTHKSLTLGIPMLKIVF. Residues 280–286 are Extracellular-facing; that stretch reads AGYEHLS. The chain crosses the membrane as a helical span at residues 287–307; that stretch reads LISVPLLIYHPAQILLGSLLV. At 308–333 the chain is on the cytoplasmic side; it reads PTIKSWMVSRQKALKLTRQPKVPVKV.

Belongs to the bile acid:sodium symporter (BASS) (TC 2.A.28) family.

It localises to the cell membrane. It is found in the endoplasmic reticulum membrane. Its subcellular location is the golgi apparatus membrane. Functionally, involved in teeth and skeletal development. Has an essential role in the biosynthesis and trafficking of glycosaminoglycans and glycoproteins to produce a proper functioning extracellular matrix. Required for extracellular matrix mineralization. Also involved in the regulation of cellular calcium homeostasis. Does not show transport activity towards bile acids or steroid sulfates. The protein is Sodium/bile acid cotransporter 7 (SLC10A7) of Gallus gallus (Chicken).